Consider the following 2166-residue polypeptide: Protein TIC236, chloroplastic (2166 aa).

The N-terminal 37 residues, 1-37 (MSLRLQNPFLSTPLLHGSFNRREKRINVARRAFRSKR), are a transit peptide targeting the chloroplast. At 38-101 (IYSEKKQNDW…RSLAPVWEEG (64 aa)) the chain is on the stromal side. Residues 102 to 122 (LFFLRCSVFFAVISGVCLLVW) form a helical membrane-spanning segment. The Chloroplast intermembrane segment spans residues 123–2166 (YGQNKARVFV…LFEYSATSQD (2044 aa)). Residues 1611 to 1649 (MSEGEVSETDRGGAVKIPSWAKEKEDDEKRTSRDRSEER) are disordered. Positions 1631–1649 (AKEKEDDEKRTSRDRSEER) are enriched in basic and acidic residues.

The protein belongs to the TamB family. Part of the TIC complex, which can interact with components of the TOC complex to form a larger import complex. Interacts with the TOC complex component TOC75-3.

The protein localises to the plastid. The protein resides in the chloroplast inner membrane. Its subcellular location is the chloroplast intermembrane space. In terms of biological role, part of the inner chloroplast membrane translocon complex (TIC) which associates with the outer chloroplast membrane translocon complex (TOC) and forms a supercomplex involved in protein precursor import into the chloroplast stroma. Required for the import of HSP93, TIC40 and RBCS protein precursors in the chloroplast stroma. Links the outer and inner membrane translocons of the chloroplast envelope. The polypeptide is Protein TIC236, chloroplastic (Arabidopsis thaliana (Mouse-ear cress)).